Reading from the N-terminus, the 250-residue chain is MAEQVKLSVELIACSSFTPPADVEWSTDVEGAEALVEFAGRACYETFDKPNPRTASNAAYLRHIMEVGHTALLEHANATMYIRGISRSATHELVRHRHFSFSQLSQRFVHSGESEVVVPTLIDEDPQLRELFMHAMDESRFAFNELLNALEEKLGDEPNALLRKKQARQAARAVLPNATESRIVVSGNFRTWRHFIGMRASEHADVEIREVAVECLRKLQVAAPTVFGDFEIETLADGSQMATSPYVMDF.

Residues 7 to 233 enclose the ThyX domain; sequence LSVELIACSS…PTVFGDFEIE (227 aa). Residues 92–95, 103–107, and Arg172 each bind dUMP; these read ELVR and QLSQR. FAD contacts are provided by residues 95-97 and Gln103; that span reads RHR. A ThyX motif motif is present at residues 95-105; it reads RHRHFSFSQLS. FAD-binding positions include 188–190 and His194; that span reads NFR. Position 199 (Arg199) interacts with dUMP. The Involved in ionization of N3 of dUMP, leading to its activation role is filled by Arg199.

This sequence belongs to the thymidylate synthase ThyX family. As to quaternary structure, homotetramer. FAD serves as cofactor.

The enzyme catalyses dUMP + (6R)-5,10-methylene-5,6,7,8-tetrahydrofolate + NADPH + H(+) = dTMP + (6S)-5,6,7,8-tetrahydrofolate + NADP(+). The protein operates within pyrimidine metabolism; dTTP biosynthesis. Its function is as follows. Catalyzes the reductive methylation of 2'-deoxyuridine-5'-monophosphate (dUMP) to 2'-deoxythymidine-5'-monophosphate (dTMP) while utilizing 5,10-methylenetetrahydrofolate (mTHF) as the methyl donor, and NADPH and FADH(2) as the reductant. The sequence is that of Flavin-dependent thymidylate synthase from Corynebacterium glutamicum (strain ATCC 13032 / DSM 20300 / JCM 1318 / BCRC 11384 / CCUG 27702 / LMG 3730 / NBRC 12168 / NCIMB 10025 / NRRL B-2784 / 534).